A 203-amino-acid polypeptide reads, in one-letter code: dITP/XTP pyrophosphatase (203 aa).

A substrate-binding site is contributed by 8 to 13 (SNNAGK). Residues Asp-40 and Asp-69 each coordinate Mg(2+). Asp-69 acts as the Proton acceptor in catalysis. Substrate-binding positions include Ser-70, 152–155 (FGYD), Lys-175, and 180–181 (HR).

The protein belongs to the HAM1 NTPase family. As to quaternary structure, homodimer. Mg(2+) is required as a cofactor.

It catalyses the reaction XTP + H2O = XMP + diphosphate + H(+). The catalysed reaction is dITP + H2O = dIMP + diphosphate + H(+). It carries out the reaction ITP + H2O = IMP + diphosphate + H(+). In terms of biological role, pyrophosphatase that catalyzes the hydrolysis of nucleoside triphosphates to their monophosphate derivatives, with a high preference for the non-canonical purine nucleotides XTP (xanthosine triphosphate), dITP (deoxyinosine triphosphate) and ITP. Seems to function as a house-cleaning enzyme that removes non-canonical purine nucleotides from the nucleotide pool, thus preventing their incorporation into DNA/RNA and avoiding chromosomal lesions. This is dITP/XTP pyrophosphatase from Nitrosomonas europaea (strain ATCC 19718 / CIP 103999 / KCTC 2705 / NBRC 14298).